We begin with the raw amino-acid sequence, 569 residues long: S-(+)-linalool synthase, chloroplastic (569 aa).

The N-terminal 39 residues, 1-39 (MALIATKISSRSCFVSAYPNNSPTFLISKFPNTVDSLSP), are a transit peptide targeting the chloroplast. 5 residues coordinate (2E)-geranyl diphosphate: Arg-294, Asp-331, Asp-335, Arg-472, and Asp-475. Mg(2+) is bound by residues Asp-331 and Asp-335. The DDXXD motif motif lies at 331–335 (DDIFD). Residues Asp-475, Ser-479, and Glu-483 each contribute to the Mg(2+) site.

The protein belongs to the terpene synthase family. Tpsb subfamily. It depends on Mg(2+) as a cofactor. Mn(2+) serves as cofactor. In terms of tissue distribution, predominantly expressed in flowers but also in stems and siliques.

The protein localises to the plastid. The protein resides in the chloroplast. It catalyses the reaction (2E)-geranyl diphosphate + H2O = (S)-linalool + diphosphate. It functions in the pathway secondary metabolite biosynthesis; terpenoid biosynthesis. Functionally, involved in monoterpene (C10) biosynthesis. The major product is (S)-linalool. This chain is S-(+)-linalool synthase, chloroplastic, found in Arabidopsis thaliana (Mouse-ear cress).